Reading from the N-terminus, the 248-residue chain is tRNA pseudouridine synthase A (248 aa).

Asp53 (nucleophile) is an active-site residue. Tyr111 contacts substrate.

The protein belongs to the tRNA pseudouridine synthase TruA family. Homodimer.

It catalyses the reaction uridine(38/39/40) in tRNA = pseudouridine(38/39/40) in tRNA. Functionally, formation of pseudouridine at positions 38, 39 and 40 in the anticodon stem and loop of transfer RNAs. The polypeptide is tRNA pseudouridine synthase A (Streptococcus thermophilus (strain CNRZ 1066)).